The following is a 90-amino-acid chain: Small ribosomal subunit protein bS20 (90 aa).

Over residues 1–10 (MANHKSTQKS) the composition is skewed to polar residues. The segment at 1-25 (MANHKSTQKSIRQDQKRNLINKSRK) is disordered.

This sequence belongs to the bacterial ribosomal protein bS20 family.

In terms of biological role, binds directly to 16S ribosomal RNA. This Orientia tsutsugamushi (strain Ikeda) (Rickettsia tsutsugamushi) protein is Small ribosomal subunit protein bS20.